Here is a 557-residue protein sequence, read N- to C-terminus: Potassium-transporting ATPase potassium-binding subunit (557 aa).

The next 12 membrane-spanning stretches (helical) occupy residues 5–25 (GFLL…PLGS), 63–83 (LCAI…MLLG), 132–152 (GLTV…FALI), 170–190 (LLRI…LFFI), 253–273 (FVQM…FGEV), 283–303 (LLWA…WAEV), 329–349 (VLVS…AVIA), 356–376 (ALGG…FGGV), 379–399 (GLYG…LMIG), 416–436 (LTAL…ALAM), 484–504 (LLAF…MAIA), and 526–546 (LFVG…FIPA).

This sequence belongs to the KdpA family. The system is composed of three essential subunits: KdpA, KdpB and KdpC.

It localises to the cell inner membrane. In terms of biological role, part of the high-affinity ATP-driven potassium transport (or Kdp) system, which catalyzes the hydrolysis of ATP coupled with the electrogenic transport of potassium into the cytoplasm. This subunit binds the periplasmic potassium ions and delivers the ions to the membrane domain of KdpB through an intramembrane tunnel. The polypeptide is Potassium-transporting ATPase potassium-binding subunit (Escherichia coli (strain SE11)).